We begin with the raw amino-acid sequence, 734 residues long: Protein arginine N-methyltransferase 5 (734 aa).

A compositionally biased stretch (polar residues) spans 1-16; it reads MSNRTYADNLFPQQVA. Residues 1–39 form a disordered region; that stretch reads MSNRTYADNLFPQQVAEQHEEQMSSGSSPKSNSPSRSIS. Residues 24–39 are compositionally biased toward low complexity; that stretch reads SSGSSPKSNSPSRSIS. The segment at 42-329 is TIM barrel; that stretch reads EAANSRIHIG…EYSQALRHAV (288 aa). An SAM-dependent MTase PRMT-type domain is found at 360–706; it reads LQAPLQPLSE…VDNTGVWYEW (347 aa). Position 376 (Tyr376) interacts with S-adenosyl-L-methionine. Phe379 provides a ligand contact to a protein. Residues 385 to 386, Glu450, and 477 to 478 contribute to the S-adenosyl-L-methionine site; these read KY and DM. Residues Glu499 and Glu508 each coordinate a protein. Catalysis depends on proton donor/acceptor residues Glu499 and Glu508. The beta barrel stretch occupies residues 529–734; it reads PQKYTSYVKP…PNGESYYMRM (206 aa). Residues 541 to 589 are dimerization; the sequence is STHIHQTIKAQSIPYLSRAIPSHGRGEPELDEDEMWIQKYPQGHVRNNM.

This sequence belongs to the class I-like SAM-binding methyltransferase superfamily. Protein arginine N-methyltransferase family. As to quaternary structure, homodimer. Interacts with cep-1 (via C-terminus domain); does not methylate cep-1. Interacts with cbp-1 (via N-terminus domain and HAT domain); the interaction results in methylation of cbp-1. Component of a complex that contains cep-1 and cbp-1. May interact with pid-2, pid-4 and pid-5.

It localises to the nucleus. It carries out the reaction L-arginyl-[protein] + 2 S-adenosyl-L-methionine = N(omega),N(omega)'-dimethyl-L-arginyl-[protein] + 2 S-adenosyl-L-homocysteine + 2 H(+). Functionally, catalyzes the symmetrical dimethylation of arginine residues in targets such as small nuclear ribonucleoproteins, histone H2A/H4 and cbp-1. Dimethylation occurs in a distributive manner where the protein is released after the addition of the first methyl group prior to rebinding for the addition of the second methyl group. Plays a role in the negative regulation of DNA damage-induced apoptosis. By methylating cbp-1, may prevent apoptosis by repressing the capacity of cbp-1 to enhance cep-1 dependent transcription activation of the programmed cell death activator egl-1. Plays a role in heat and oxidative stress resistance. This chain is Protein arginine N-methyltransferase 5, found in Caenorhabditis elegans.